Consider the following 150-residue polypeptide: Large ribosomal subunit protein bL9 (150 aa).

Belongs to the bacterial ribosomal protein bL9 family.

Binds to the 23S rRNA. In Vibrio parahaemolyticus serotype O3:K6 (strain RIMD 2210633), this protein is Large ribosomal subunit protein bL9.